The primary structure comprises 710 residues: PWWP domain-containing DNA repair factor 3A (710 aa).

The tract at residues 106–160 (QESSAGTGRADRSLRGKPMEHVSSPCDSNSSSLPRGDVLGSSRPHRRRPCVQQSL) is disordered. Residues 114-125 (RADRSLRGKPME) are compositionally biased toward basic and acidic residues. Residues 128–137 (SSPCDSNSSS) show a composition bias toward low complexity. Serine 161 carries the phosphoserine modification. Disordered regions lie at residues 177-204 (KKGLRKSENPRGPLVLPAGGGAQDESGS) and 230-398 (NGSS…EEPP). The segment covering 288 to 297 (PSACSEPGEC) has biased composition (low complexity). Residues serine 374 and serine 375 each carry the phosphoserine modification. Over residues 375–385 (SEESMGSNSMR) the composition is skewed to polar residues. In terms of domain architecture, PWWP spans 411–472 (VGMLVWHKHK…KHFDCKEKQT (62 aa)).

This sequence belongs to the PWWP3A family. As to quaternary structure, interacts with TP53BP1 (via BRCT domain); the interaction is not dependent on its phosphorylation status. Binds nucleosomes. Interacts with trimethylated 'Lys-36' of histone H3 (H3K36me3) (in vitro).

The protein resides in the nucleus. Functionally, involved in the DNA damage response pathway by contributing to the maintenance of chromatin architecture. Recruited to the vicinity of DNA breaks by TP53BP1 and plays an accessory role to facilitate damage-induced chromatin changes and promoting chromatin relaxation. Required for efficient DNA repair and cell survival following DNA damage. The sequence is that of PWWP domain-containing DNA repair factor 3A from Homo sapiens (Human).